We begin with the raw amino-acid sequence, 328 residues long: Biotin synthase (328 aa).

The Radical SAM core domain occupies 42-267 (YHVQLASLLS…LMPGSRVRLS (226 aa)). [4Fe-4S] cluster contacts are provided by cysteine 57, cysteine 61, and cysteine 64. Residues cysteine 101, cysteine 133, cysteine 193, and arginine 265 each coordinate [2Fe-2S] cluster.

It belongs to the radical SAM superfamily. Biotin synthase family. As to quaternary structure, homodimer. [4Fe-4S] cluster is required as a cofactor. The cofactor is [2Fe-2S] cluster.

It catalyses the reaction (4R,5S)-dethiobiotin + (sulfur carrier)-SH + 2 reduced [2Fe-2S]-[ferredoxin] + 2 S-adenosyl-L-methionine = (sulfur carrier)-H + biotin + 2 5'-deoxyadenosine + 2 L-methionine + 2 oxidized [2Fe-2S]-[ferredoxin]. The protein operates within cofactor biosynthesis; biotin biosynthesis; biotin from 7,8-diaminononanoate: step 2/2. Its function is as follows. Catalyzes the conversion of dethiobiotin (DTB) to biotin by the insertion of a sulfur atom into dethiobiotin via a radical-based mechanism. The chain is Biotin synthase from Synechococcus sp. (strain CC9311).